We begin with the raw amino-acid sequence, 215 residues long: UPF0502 protein Gbem_0102 (215 aa).

It belongs to the UPF0502 family.

The sequence is that of UPF0502 protein Gbem_0102 from Citrifermentans bemidjiense (strain ATCC BAA-1014 / DSM 16622 / JCM 12645 / Bem) (Geobacter bemidjiensis).